The primary structure comprises 210 residues: MSKKRSSSSNRWLNEHFKDKYVKQVHKNKSDIRSRAWFKLDDIQSSNNFLKVGMTVVDLGSSPGSWSGYAVKRVGKKGRVIACDMRPMLPIKDVVFFQGNIKNKCFFNFIETYLCHKKVHVIISDMAPNMTGHYFIDHIQAILLSKLALKMSIKVLSKGGSLLVKSFYGQEFNSFIQDVHVTFSKVKICKPNSSRARSREVYILASGRKM.

S-adenosyl-L-methionine contacts are provided by Gly-64, Trp-66, Asp-84, Asn-100, and Asp-125. Lys-165 functions as the Proton acceptor in the catalytic mechanism.

Belongs to the class I-like SAM-binding methyltransferase superfamily. RNA methyltransferase RlmE family.

The protein resides in the cytoplasm. It catalyses the reaction uridine(2552) in 23S rRNA + S-adenosyl-L-methionine = 2'-O-methyluridine(2552) in 23S rRNA + S-adenosyl-L-homocysteine + H(+). Specifically methylates the uridine in position 2552 of 23S rRNA at the 2'-O position of the ribose in the fully assembled 50S ribosomal subunit. The chain is Ribosomal RNA large subunit methyltransferase E from Buchnera aphidicola subsp. Baizongia pistaciae (strain Bp).